Consider the following 282-residue polypeptide: 4-hydroxybenzoate octaprenyltransferase (282 aa).

Helical transmembrane passes span 17–37 (IGIL…NQGF), 40–60 (IDLL…GCVI), 90–110 (AFIL…KLPI), 113–133 (FYFA…KRFF), 135–155 (APQL…FIAS), 163–183 (FIVL…MYAM), 207–227 (LIIA…AINK), 231–251 (CFFY…LKLI), and 262–282 (AFLV…LALI).

The protein belongs to the UbiA prenyltransferase family. Mg(2+) serves as cofactor.

The protein resides in the cell inner membrane. The catalysed reaction is all-trans-octaprenyl diphosphate + 4-hydroxybenzoate = 4-hydroxy-3-(all-trans-octaprenyl)benzoate + diphosphate. It participates in cofactor biosynthesis; ubiquinone biosynthesis. Functionally, catalyzes the prenylation of para-hydroxybenzoate (PHB) with an all-trans polyprenyl group. Mediates the second step in the final reaction sequence of ubiquinone-8 (UQ-8) biosynthesis, which is the condensation of the polyisoprenoid side chain with PHB, generating the first membrane-bound Q intermediate 3-octaprenyl-4-hydroxybenzoate. The polypeptide is 4-hydroxybenzoate octaprenyltransferase (Legionella pneumophila (strain Lens)).